We begin with the raw amino-acid sequence, 195 residues long: ATP-dependent Clp protease proteolytic subunit (195 aa).

Ser-98 serves as the catalytic Nucleophile. His-123 is an active-site residue.

The protein belongs to the peptidase S14 family. Fourteen ClpP subunits assemble into 2 heptameric rings which stack back to back to give a disk-like structure with a central cavity, resembling the structure of eukaryotic proteasomes.

It localises to the cytoplasm. It catalyses the reaction Hydrolysis of proteins to small peptides in the presence of ATP and magnesium. alpha-casein is the usual test substrate. In the absence of ATP, only oligopeptides shorter than five residues are hydrolyzed (such as succinyl-Leu-Tyr-|-NHMec, and Leu-Tyr-Leu-|-Tyr-Trp, in which cleavage of the -Tyr-|-Leu- and -Tyr-|-Trp bonds also occurs).. Its function is as follows. Cleaves peptides in various proteins in a process that requires ATP hydrolysis. Has a chymotrypsin-like activity. Plays a major role in the degradation of misfolded proteins. The sequence is that of ATP-dependent Clp protease proteolytic subunit from Wolinella succinogenes (strain ATCC 29543 / DSM 1740 / CCUG 13145 / JCM 31913 / LMG 7466 / NCTC 11488 / FDC 602W) (Vibrio succinogenes).